A 5263-amino-acid chain; its full sequence is Fibroin heavy chain (5263 aa).

The N-terminal stretch at 1 to 21 (MRVKTFVILCCALQYVAYTNA) is a signal peptide. Residues 149 to 5206 (AAVGAGAGAG…GSGAGAGGSV (5058 aa)) form a highly repetitive region. C5260 and C5263 are joined by a disulfide.

As to quaternary structure, silk fibroin elementary unit consists in a disulfide-linked heavy and light chain and a p25 glycoprotein in molar ratios of 6:6:1. This results in a complex of approximately 2.3 MDa. Post-translationally, the interchain disulfide bridge is essential for the intracellular transport and secretion of fibroin. Produced exclusively in the posterior (PSG) section of silk glands, which are essentially modified salivary glands.

Core component of the silk filament; a strong, insoluble and chemically inert fiber. This is Fibroin heavy chain (FIBH) from Bombyx mori (Silk moth).